The chain runs to 345 residues: Tetraacyldisaccharide 4'-kinase (345 aa).

An ATP-binding site is contributed by 61-68 (TAGGTGKT).

The protein belongs to the LpxK family.

The catalysed reaction is a lipid A disaccharide + ATP = a lipid IVA + ADP + H(+). The protein operates within glycolipid biosynthesis; lipid IV(A) biosynthesis; lipid IV(A) from (3R)-3-hydroxytetradecanoyl-[acyl-carrier-protein] and UDP-N-acetyl-alpha-D-glucosamine: step 6/6. Its function is as follows. Transfers the gamma-phosphate of ATP to the 4'-position of a tetraacyldisaccharide 1-phosphate intermediate (termed DS-1-P) to form tetraacyldisaccharide 1,4'-bis-phosphate (lipid IVA). This chain is Tetraacyldisaccharide 4'-kinase, found in Xanthomonas euvesicatoria pv. vesicatoria (strain 85-10) (Xanthomonas campestris pv. vesicatoria).